A 1489-amino-acid polypeptide reads, in one-letter code: Calmodulin-regulated spectrin-associated protein 2 (1489 aa).

A Calponin-homology (CH) domain is found at tryptophan 222–glutamate 335. Residues serine 375–serine 415 are disordered. Residues serine 405–serine 415 are compositionally biased toward low complexity. Residues serine 416 and serine 418 each carry the phosphoserine modification. Threonine 426 is modified (phosphothreonine). A phosphoserine mark is found at serine 464, serine 598, serine 599, serine 611, and serine 673. Disordered stretches follow at residues serine 611–serine 639 and threonine 668–leucine 730. Residues threonine 668 to valine 679 show a composition bias toward polar residues. Residue threonine 678 is modified to Phosphothreonine. Position 680 is a phosphoserine (serine 680). Positions serine 680–serine 699 are enriched in low complexity. Residues glutamine 703 to glycine 713 show a composition bias toward basic and acidic residues. Residues leucine 756 to methionine 793 adopt a coiled-coil conformation. The tract at residues leucine 812–serine 844 is disordered. Position 862 is a phosphoserine (serine 862). The stretch at glutamate 887–glutamine 926 forms a coiled coil. The interval methionine 922–glycine 1034 is MBD region. Positions glutamine 925–arginine 1017 are disordered. 2 positions are modified to phosphoserine: serine 931 and serine 936. Over residues serine 960–proline 989 the composition is skewed to polar residues. 3 positions are modified to phosphothreonine: threonine 997, threonine 1002, and threonine 1004. Phosphoserine occurs at positions 1008 and 1019. Disordered stretches follow at residues cysteine 1032–serine 1078, proline 1096–glutamine 1152, and lysine 1191–glycine 1349. A compositionally biased stretch (basic and acidic residues) spans proline 1039–proline 1075. Pro residues predominate over residues threonine 1105–alanine 1117. Composition is skewed to basic and acidic residues over residues lysine 1132 to glutamine 1152 and lysine 1191 to isoleucine 1252. Serine 1148 carries the post-translational modification Phosphoserine. The stretch at lysine 1166–arginine 1238 forms a coiled coil. Positions serine 1287–asparagine 1299 are enriched in polar residues. 3 positions are modified to phosphoserine: serine 1313, serine 1319, and serine 1321. Polar residues predominate over residues asparagine 1334–glutamate 1346. In terms of domain architecture, CKK spans glycine 1349–lysine 1483.

The protein belongs to the CAMSAP1 family. In terms of assembly, interacts with CAMSAP3. Interacts with KATNA1 and KATNB1; leading to regulate the length of CAMSAP2-decorated microtubule stretches. Interacts with a complex formed by AKAP9 and PDE4DIP isoform 13/MMG8/SMYLE, which recruits CAMSAP2 to the Golgi. Interacts with MAPRE1/EB1.

It localises to the cytoplasm. Its subcellular location is the cytoskeleton. The protein resides in the golgi apparatus. It is found in the cilium basal body. Key microtubule-organizing protein that specifically binds the minus-end of non-centrosomal microtubules and regulates their dynamics and organization. Specifically recognizes growing microtubule minus-ends and autonomously decorates and stabilizes microtubule lattice formed by microtubule minus-end polymerization. Acts on free microtubule minus-ends that are not capped by microtubule-nucleating proteins or other factors and protects microtubule minus-ends from depolymerization. In addition, it also reduces the velocity of microtubule polymerization. Through the microtubule cytoskeleton, also regulates the organization of cellular organelles including the Golgi and the early endosomes. Essential for the tethering, but not for nucleation of non-centrosomal microtubules at the Golgi: together with Golgi-associated proteins AKAP9 and PDE4DIP, required to tether non-centrosomal minus-end microtubules to the Golgi, an important step for polarized cell movement. Also acts as a regulator of neuronal polarity and development: localizes to non-centrosomal microtubule minus-ends in neurons and stabilizes non-centrosomal microtubules, which is required for neuronal polarity, axon specification and dendritic branch formation. Through the microtubule cytoskeleton, regulates the autophagosome transport. The polypeptide is Calmodulin-regulated spectrin-associated protein 2 (Homo sapiens (Human)).